Reading from the N-terminus, the 556-residue chain is MSGAIFTSLEGPGALDGTSGHPLVCPLCHAQYERPCLLDCFHEFCAGCLRGRAADGRLACPLCQHQTVVKGPSGLPPVDRLLQFLVDSSGDGTEVVRCANCDLECGKQDAETTYFCNTCGQPLCARCRDETHRARMFARHDIVALGQRSRDVLQKCTLHAEPYVLFSTDKKSLLCIRCFRDMQGESRVHCVDLESAYVQGCERLQQAVLEVKALQTATREAIELLQAMVEEVRRSAAEEEAAIQALFSSMQDKLSERKALLLQAVQSLANKAEFLDLGYELMERLQGIVTRPHRLRPAQSSKITSDHRAEFARCLEPLLLLGPRRAAGAGGGTSTLTGGLGPKVLRGPGCPSPVGKMLGSPVQKPTLHRSISTKVLLAEGDASPFTEHCRHYEDSYRRLQAEMQNLKDQVQELHRDLTKHHSLIKAEIMGDILHKALQVDAQIASEYASVEGLRAVFQEIWEDSYQRVANEQEIYEAQLHDLLQLKQENAYLTTITKQITPYIRSIAKVKERLEPRFQVPVDEPSDHPQNTHDDGVNAEAPARVSTLKPAMEKEVS.

The segment at 25–64 adopts an RING-type zinc-finger fold; that stretch reads CPLCHAQYERPCLLDCFHEFCAGCLRGRAADGRLACPLCQ. A B box-type; atypical zinc finger spans residues 93 to 145; that stretch reads TEVVRCANCDLECGKQDAETTYFCNTCGQPLCARCRDETHRARMFARHDIVAL. Zn(2+)-binding residues include cysteine 98, cysteine 101, cysteine 127, and histidine 132. Coiled-coil stretches lie at residues 218-273 and 385-425; these read TREA…NKAE and FTEH…SLIK. The interval 517–556 is disordered; that stretch reads FQVPVDEPSDHPQNTHDDGVNAEAPARVSTLKPAMEKEVS. The span at 524–535 shows a compositional bias: basic and acidic residues; that stretch reads PSDHPQNTHDDG.

In terms of assembly, interacts with the core-glycosylated, but not the fully glycosylated form of KCNH2/HERG. Interacts with DNAJA1 and HSPA8. Interacts (via the C-terminus) with HSPA1A; this interaction additively increases KCNH2 expression.

Its subcellular location is the cytoplasm. Plays a role in cardiac repolarization possibly by stabilizing membrane expression of the potassium channel KCNH2/HERG, or by assisting its synthesis, folding or export from the endoplasmic reticulum, in a heat shock protein-dependent manner. In Bos taurus (Bovine), this protein is RING finger protein 207 (RNF207).